An 85-amino-acid chain; its full sequence is Cell division topological specificity factor (85 aa).

The protein belongs to the MinE family.

In terms of biological role, prevents the cell division inhibition by proteins MinC and MinD at internal division sites while permitting inhibition at polar sites. This ensures cell division at the proper site by restricting the formation of a division septum at the midpoint of the long axis of the cell. This is Cell division topological specificity factor from Xanthomonas campestris pv. campestris (strain 8004).